The primary structure comprises 1583 residues: Pentafunctional AROM polypeptide (1583 aa).

The interval Met1–Asn384 is 3-dehydroquinate synthase. Residues Asp44 to Asn46, Glu81 to Lys84, Gly114 to Val116, and Asp119 each bind NAD(+). A 7-phospho-2-dehydro-3-deoxy-D-arabino-heptonate-binding site is contributed by Arg130. NAD(+) is bound at residue Thr139 to Thr140. 7-phospho-2-dehydro-3-deoxy-D-arabino-heptonate is bound by residues Asp146 and Lys152. Lys161 provides a ligand contact to NAD(+). Residue Asn162 participates in 7-phospho-2-dehydro-3-deoxy-D-arabino-heptonate binding. NAD(+) contacts are provided by residues Phe179–Thr182 and Asn190. Glu194 provides a ligand contact to Zn(2+). 7-phospho-2-dehydro-3-deoxy-D-arabino-heptonate is bound by residues Glu194 to Lys197 and Lys250. The active-site Proton acceptor; for 3-dehydroquinate synthase activity is the Glu260. 7-phospho-2-dehydro-3-deoxy-D-arabino-heptonate is bound by residues Arg264–Asn268 and His271. His271 is a Zn(2+) binding site. The Proton acceptor; for 3-dehydroquinate synthase activity role is filled by His275. Residues His287 and Lys356 each contribute to the 7-phospho-2-dehydro-3-deoxy-D-arabino-heptonate site. A Zn(2+)-binding site is contributed by His287. Residues Val397–Val842 are EPSP synthase. The active-site For EPSP synthase activity is Cys824. Residues Asn863–Ser1055 are shikimate kinase. Residue Gly870–Ser877 participates in ATP binding. The interval Leu1056–Glu1276 is 3-dehydroquinase. The active-site Proton acceptor; for 3-dehydroquinate dehydratase activity is the His1179. Residue Lys1207 is the Schiff-base intermediate with substrate; for 3-dehydroquinate dehydratase activity of the active site. The tract at residues Pro1289–Ile1583 is shikimate dehydrogenase.

It in the N-terminal section; belongs to the sugar phosphate cyclases superfamily. Dehydroquinate synthase family. In the 2nd section; belongs to the EPSP synthase family. The protein in the 3rd section; belongs to the shikimate kinase family. This sequence in the 4th section; belongs to the type-I 3-dehydroquinase family. It in the C-terminal section; belongs to the shikimate dehydrogenase family. In terms of assembly, homodimer. Requires Zn(2+) as cofactor.

The protein localises to the cytoplasm. It carries out the reaction 7-phospho-2-dehydro-3-deoxy-D-arabino-heptonate = 3-dehydroquinate + phosphate. The enzyme catalyses 3-dehydroquinate = 3-dehydroshikimate + H2O. The catalysed reaction is shikimate + NADP(+) = 3-dehydroshikimate + NADPH + H(+). It catalyses the reaction shikimate + ATP = 3-phosphoshikimate + ADP + H(+). It carries out the reaction 3-phosphoshikimate + phosphoenolpyruvate = 5-O-(1-carboxyvinyl)-3-phosphoshikimate + phosphate. It functions in the pathway metabolic intermediate biosynthesis; chorismate biosynthesis; chorismate from D-erythrose 4-phosphate and phosphoenolpyruvate: step 2/7. It participates in metabolic intermediate biosynthesis; chorismate biosynthesis; chorismate from D-erythrose 4-phosphate and phosphoenolpyruvate: step 3/7. Its pathway is metabolic intermediate biosynthesis; chorismate biosynthesis; chorismate from D-erythrose 4-phosphate and phosphoenolpyruvate: step 4/7. The protein operates within metabolic intermediate biosynthesis; chorismate biosynthesis; chorismate from D-erythrose 4-phosphate and phosphoenolpyruvate: step 5/7. It functions in the pathway metabolic intermediate biosynthesis; chorismate biosynthesis; chorismate from D-erythrose 4-phosphate and phosphoenolpyruvate: step 6/7. In terms of biological role, the AROM polypeptide catalyzes 5 consecutive enzymatic reactions in prechorismate polyaromatic amino acid biosynthesis. This is Pentafunctional AROM polypeptide (aromA) from Emericella nidulans (strain FGSC A4 / ATCC 38163 / CBS 112.46 / NRRL 194 / M139) (Aspergillus nidulans).